Consider the following 827-residue polypeptide: SH3-containing GRB2-like protein 3-interacting protein 1 (827 aa).

Disordered stretches follow at residues Met-1–Lys-116, Ile-143–Pro-199, and Ile-223–Thr-278. 2 stretches are compositionally biased toward basic and acidic residues: residues Arg-16–Gly-32 and Leu-40–Gly-53. A phosphoserine mark is found at Ser-78, Ser-104, Ser-105, Ser-107, Ser-149, Ser-151, Ser-156, and Ser-169. 2 positions are modified to phosphothreonine: Thr-180 and Thr-182. Phosphoserine is present on Ser-236. Residues Thr-245–Pro-260 are compositionally biased toward pro residues. 2 positions are modified to phosphothreonine: Thr-247 and Thr-259. Phosphoserine occurs at positions 265, 287, 289, 300, 316, and 319. Residues Ser-265 to Ala-276 are compositionally biased toward polar residues. Positions Phe-315 to Thr-505 are disordered. Residues Ser-319–Val-333 show a composition bias toward basic and acidic residues. A phosphothreonine mark is found at Thr-324, Thr-328, and Thr-335. The segment covering Thr-335–Asp-345 has biased composition (low complexity). Residues Ser-346 to Val-369 show a composition bias toward pro residues. At Ser-371 the chain carries Phosphoserine. Residues Glu-377–Tyr-392 are compositionally biased toward basic and acidic residues. Phosphoserine is present on Ser-398. At Thr-409 the chain carries Phosphothreonine. The span at Ala-436–Ser-455 shows a compositional bias: low complexity. Residues Thr-456–Lys-474 are compositionally biased toward pro residues. Positions Ser-481–Ser-491 are enriched in low complexity. At Ser-485 the chain carries Phosphoserine. Residues Thr-558–Asp-826 enclose the MHD domain. Interaction with DPF motifs-containing proteins stretches follow at residues Pro-560–Thr-566, Ser-592–Pro-594, Thr-666–Asn-669, and Ser-812–Arg-817. A necessary and sufficient to mediate interaction with CANX region spans residues Met-648 to Asn-827.

Interacts with proteins essential or regulating the formation of functional clathrin-coated pits. Interacts with CANX. Interacts with AP2A1. Interacts with EPS15. Interacts with SH3GL3. Interacts with AMPH. Interacts with ITSN1 (via SH3 domains). Interacts with and REPS1. In terms of tissue distribution, specifically expressed in brain. Also detected at lower levels in spleen and adipose tissue.

Its subcellular location is the membrane. The protein localises to the clathrin-coated pit. Its function is as follows. May function in clathrin-mediated endocytosis. Has both a membrane binding/tubulating activity and the ability to recruit proteins essential to the formation of functional clathrin-coated pits. Has a preference for membranes enriched in phosphatidylserine and phosphoinositides and is required for the endocytosis of the transferrin receptor. May also bind tubulin. May play a role in the regulation of energy homeostasis. This chain is SH3-containing GRB2-like protein 3-interacting protein 1 (SGIP1), found in Psammomys obesus (Fat sand rat).